A 278-amino-acid polypeptide reads, in one-letter code: Undecaprenyl-diphosphatase 3 (278 aa).

A run of 6 helical transmembrane segments spans residues 42–62 (DITA…LLYF), 88–108 (YRFG…GVAF), 119–139 (LWFV…ADHV), 187–207 (VAVT…AAAL), 224–244 (ATII…AWLL), and 254–274 (VFIG…ATGI).

It belongs to the UppP family.

The protein resides in the cell membrane. The enzyme catalyses di-trans,octa-cis-undecaprenyl diphosphate + H2O = di-trans,octa-cis-undecaprenyl phosphate + phosphate + H(+). In terms of biological role, catalyzes the dephosphorylation of undecaprenyl diphosphate (UPP). Confers resistance to bacitracin. The chain is Undecaprenyl-diphosphatase 3 from Frankia casuarinae (strain DSM 45818 / CECT 9043 / HFP020203 / CcI3).